A 464-amino-acid polypeptide reads, in one-letter code: Protein FAM90A15 (464 aa).

Disordered stretches follow at residues 1-42, 70-389, and 415-437; these read MMAR…DPRL, PATL…HDGA, and HSPE…SEAP. Composition is skewed to basic and acidic residues over residues 74–89 and 97–114; these read GKKE…KPRV and NKDK…DPQR. The segment covering 180–197 has biased composition (low complexity); the sequence is LASLSPLRKASLSSSSSL.

This sequence belongs to the FAM90 family.

The polypeptide is Protein FAM90A15 (Homo sapiens (Human)).